We begin with the raw amino-acid sequence, 221 residues long: Interleukin-12 subunit alpha (221 aa).

The signal sequence occupies residues 1 to 25 (MCPLRSLLLISTLVLLHHLPHLSLG). Cystine bridges form between cysteine 39-cysteine 112, cysteine 66-cysteine 198, and cysteine 87-cysteine 125. N-linked (GlcNAc...) asparagine glycosylation occurs at asparagine 95.

Belongs to the IL-6 superfamily. In terms of assembly, heterodimer with IL12B; disulfide-linked. This heterodimer is known as interleukin IL-12. Heterodimer with EBI3/IL27B; not disulfide-linked. This heterodimer is known as interleukin IL-35. Interacts with NBR1; this interaction promotes IL-12 secretion.

The protein resides in the secreted. Its function is as follows. Heterodimerizes with IL12B to form the IL-12 cytokine or with EBI3/IL27B to form the IL-35 cytokine. IL-12 is primarily produced by professional antigen-presenting cells (APCs) such as B-cells and dendritic cells (DCs) as well as macrophages and granulocytes and regulates T-cell and natural killer-cell responses, induces the production of interferon-gamma (IFN-gamma), favors the differentiation of T-helper 1 (Th1) cells and is an important link between innate resistance and adaptive immunity. Mechanistically, exerts its biological effects through a receptor composed of IL12R1 and IL12R2 subunits. Binding to the receptor results in the rapid tyrosine phosphorylation of a number of cellular substrates including the JAK family kinases TYK2 and JAK2. In turn, recruited STAT4 gets phosphorylated and translocates to the nucleus where it regulates cytokine/growth factor responsive genes. As part of IL-35, plays essential roles in maintaining the immune homeostasis of the liver microenvironment and also functions as an immune-suppressive cytokine. Mediates biological events through unconventional receptors composed of IL12RB2 and gp130/IL6ST heterodimers or homodimers. Signaling requires the transcription factors STAT1 and STAT4, which form a unique heterodimer that binds to distinct DNA sites. This chain is Interleukin-12 subunit alpha (IL12A), found in Capra hircus (Goat).